Here is a 255-residue protein sequence, read N- to C-terminus: Methylthioribulose-1-phosphate dehydratase (255 aa).

Residue Cys-111 coordinates substrate. The Zn(2+) site is built by His-128 and His-130. Glu-157 acts as the Proton donor/acceptor in catalysis. His-213 is a Zn(2+) binding site.

It belongs to the aldolase class II family. MtnB subfamily. Requires Zn(2+) as cofactor.

Its subcellular location is the cytoplasm. It carries out the reaction 5-(methylsulfanyl)-D-ribulose 1-phosphate = 5-methylsulfanyl-2,3-dioxopentyl phosphate + H2O. The protein operates within amino-acid biosynthesis; L-methionine biosynthesis via salvage pathway; L-methionine from S-methyl-5-thio-alpha-D-ribose 1-phosphate: step 2/6. Catalyzes the dehydration of methylthioribulose-1-phosphate (MTRu-1-P) into 2,3-diketo-5-methylthiopentyl-1-phosphate (DK-MTP-1-P). This is Methylthioribulose-1-phosphate dehydratase from Talaromyces stipitatus (strain ATCC 10500 / CBS 375.48 / QM 6759 / NRRL 1006) (Penicillium stipitatum).